Here is a 345-residue protein sequence, read N- to C-terminus: Phosphoribosylformylglycinamidine cyclo-ligase (345 aa).

The protein belongs to the AIR synthase family.

It is found in the cytoplasm. It carries out the reaction 2-formamido-N(1)-(5-O-phospho-beta-D-ribosyl)acetamidine + ATP = 5-amino-1-(5-phospho-beta-D-ribosyl)imidazole + ADP + phosphate + H(+). The protein operates within purine metabolism; IMP biosynthesis via de novo pathway; 5-amino-1-(5-phospho-D-ribosyl)imidazole from N(2)-formyl-N(1)-(5-phospho-D-ribosyl)glycinamide: step 2/2. In Tolumonas auensis (strain DSM 9187 / NBRC 110442 / TA 4), this protein is Phosphoribosylformylglycinamidine cyclo-ligase.